A 343-amino-acid chain; its full sequence is tRNA N6-adenosine threonylcarbamoyltransferase (343 aa).

Residues histidine 116 and histidine 120 each contribute to the Fe cation site. Residues 138 to 142, aspartate 171, glycine 184, aspartate 188, and asparagine 277 contribute to the substrate site; that span reads LVSGG. Residue aspartate 306 participates in Fe cation binding.

This sequence belongs to the KAE1 / TsaD family. The cofactor is Fe(2+).

Its subcellular location is the cytoplasm. The catalysed reaction is L-threonylcarbamoyladenylate + adenosine(37) in tRNA = N(6)-L-threonylcarbamoyladenosine(37) in tRNA + AMP + H(+). Required for the formation of a threonylcarbamoyl group on adenosine at position 37 (t(6)A37) in tRNAs that read codons beginning with adenine. Is involved in the transfer of the threonylcarbamoyl moiety of threonylcarbamoyl-AMP (TC-AMP) to the N6 group of A37, together with TsaE and TsaB. TsaD likely plays a direct catalytic role in this reaction. This chain is tRNA N6-adenosine threonylcarbamoyltransferase, found in Ligilactobacillus salivarius (strain UCC118) (Lactobacillus salivarius).